The chain runs to 229 residues: Heptahelical transmembrane protein ADIPOR2 (229 aa).

At 1-4 the chain is on the cytoplasmic side; it reads MQGA. Residues 5–25 form a helical membrane-spanning segment; that stretch reads ASHDAAAAAAAAAVLGGGHGV. The Extracellular segment spans residues 26–30; it reads PRWPR. A helical membrane pass occupies residues 31–51; that stretch reads MVFLVGAMTCLAISATAHLLA. Residues 52-66 lie on the Cytoplasmic side of the membrane; sequence CHSRRASVVFWQLDY. The helical transmembrane segment at 67–87 threads the bilayer; the sequence is AGISAMIVASFVPPVYYAFLC. Residues 88-92 are Extracellular-facing; that stretch reads HRPAR. Residues 93–113 form a helical membrane-spanning segment; it reads VAYLSAISALGALVVGALLSP. Topologically, residues 114-124 are cytoplasmic; it reads PCSSPRFRRLR. The chain crosses the membrane as a helical span at residues 125–145; the sequence is AALFLAMGLSGVVPALHALWL. The Extracellular portion of the chain corresponds to 146 to 153; the sequence is NWGHAACY. Residues 154-174 traverse the membrane as a helical segment; it reads LALSLEVAMGLAYAAGAWFYV. Over 175-194 the chain is Cytoplasmic; the sequence is SRVPEKWRPGVFDVVGHSHQ. A helical transmembrane segment spans residues 195 to 215; sequence IFHVLVLVGAVTHYVAVDVLL. Topologically, residues 216–229 are extracellular; that stretch reads NWRETVAAACSATS.

This sequence belongs to the ADIPOR family.

The protein localises to the membrane. May play a role in abiotic stress response. The protein is Heptahelical transmembrane protein ADIPOR2 (ADIPOR2) of Oryza sativa subsp. japonica (Rice).